We begin with the raw amino-acid sequence, 478 residues long: Probable glucan endo-1,3-beta-glucosidase A6 (478 aa).

The N-terminal stretch at 1–20 is a signal peptide; that stretch reads MSLLAFFLFTILVFSSSCCS. The Proton donor role is filled by E135. The Nucleophile role is filled by E280. C390 and C453 form a disulfide bridge.

The protein belongs to the glycosyl hydrolase 17 family. In terms of processing, contains two additional disulfide bonds, but it is unclear if they are between the pairs Cys-409-Cys-416 and Cys-425-Cys-471 or between the pairs Cys-409-Cys-471 and Cys-416-Cys-425. In terms of tissue distribution, anthers.

It catalyses the reaction Hydrolysis of (1-&gt;3)-beta-D-glucosidic linkages in (1-&gt;3)-beta-D-glucans.. Its function is as follows. Probable beta-1,3-glucanase that may be involved in the degradation of callose walls around the microspore tetrad during pollen development. May be required for pollen exine formation. This Arabidopsis thaliana (Mouse-ear cress) protein is Probable glucan endo-1,3-beta-glucosidase A6.